The sequence spans 113 residues: Mitochondrial import protein 1 (113 aa).

A helical membrane pass occupies residues 39–62 (LVSFVGSCSINLLLPFLNGMMLGF).

Belongs to the MIM1 family. As to quaternary structure, component of the MIM complex containing at least MIM1 and MIM2. Interacts with MIM2; interaction is direct. Interacts with TOM70.

Its subcellular location is the mitochondrion outer membrane. Functionally, component of the MIM complex required for mitochondrial outer membrane protein import. The MIM complex cooperates with the receptor TOM70 in binding of precursor proteins and promotes their insertion and assembly into the outer membrane. Involved in import of the subset of proteins with multiple alpha-helical transmembrane segments, including UGO1. Required for the assembly of the TOM (translocase of outer membrane) receptor complex, which is responsible for the recognition and translocation of cytosolically synthesized mitochondrial preproteins. Required specifically for assembly of TOM40, TOM20, and TOM70, but not TOM22. In Saccharomyces cerevisiae (strain ATCC 204508 / S288c) (Baker's yeast), this protein is Mitochondrial import protein 1 (MIM1).